We begin with the raw amino-acid sequence, 248 residues long: Probable capsular polysaccharide biosynthesis protein YwqC (248 aa).

2 consecutive transmembrane segments (helical) span residues isoleucine 18–phenylalanine 38 and leucine 174–leucine 194.

It belongs to the CpsC/CapA family. Post-translationally, not phosphorylated in vitro by YwqD.

It localises to the cell membrane. Its pathway is capsule biogenesis; capsule polysaccharide biosynthesis. In terms of biological role, required for YwqD kinase activity. May bring YwqD and its substrates into contact. Probably involved in the regulation of capsular polysaccharide biosynthesis. In Bacillus subtilis (strain 168), this protein is Probable capsular polysaccharide biosynthesis protein YwqC (ywqC).